Consider the following 273-residue polypeptide: Large ribosomal subunit protein uL2cz/uL2cy (273 aa).

Disordered regions lie at residues 1 to 20 (MAKH…TIDR) and 225 to 273 (PVDH…RRRK).

It belongs to the universal ribosomal protein uL2 family. As to quaternary structure, part of the 50S ribosomal subunit.

The protein localises to the plastid. It localises to the chloroplast. This chain is Large ribosomal subunit protein uL2cz/uL2cy (rpl2-A), found in Oryza nivara (Indian wild rice).